The primary structure comprises 265 residues: S-adenosylmethionine decarboxylase proenzyme (265 aa).

The active-site Schiff-base intermediate with substrate; via pyruvic acid is the Ser-114. Ser-114 carries the pyruvic acid (Ser); by autocatalysis modification. Catalysis depends on His-119, which acts as the Proton acceptor; for processing activity. The active-site Proton donor; for catalytic activity is Cys-142.

Belongs to the prokaryotic AdoMetDC family. Type 2 subfamily. Heterooctamer of four alpha and four beta chains arranged as a tetramer of alpha/beta heterodimers. Requires pyruvate as cofactor. In terms of processing, is synthesized initially as an inactive proenzyme. Formation of the active enzyme involves a self-maturation process in which the active site pyruvoyl group is generated from an internal serine residue via an autocatalytic post-translational modification. Two non-identical subunits are generated from the proenzyme in this reaction, and the pyruvate is formed at the N-terminus of the alpha chain, which is derived from the carboxyl end of the proenzyme. The post-translation cleavage follows an unusual pathway, termed non-hydrolytic serinolysis, in which the side chain hydroxyl group of the serine supplies its oxygen atom to form the C-terminus of the beta chain, while the remainder of the serine residue undergoes an oxidative deamination to produce ammonia and the pyruvoyl group blocking the N-terminus of the alpha chain.

It catalyses the reaction S-adenosyl-L-methionine + H(+) = S-adenosyl 3-(methylsulfanyl)propylamine + CO2. It functions in the pathway amine and polyamine biosynthesis; S-adenosylmethioninamine biosynthesis; S-adenosylmethioninamine from S-adenosyl-L-methionine: step 1/1. Catalyzes the decarboxylation of S-adenosylmethionine to S-adenosylmethioninamine (dcAdoMet), the propylamine donor required for the synthesis of the polyamines spermine and spermidine from the diamine putrescine. This Buchnera aphidicola subsp. Acyrthosiphon pisum (strain APS) (Acyrthosiphon pisum symbiotic bacterium) protein is S-adenosylmethionine decarboxylase proenzyme.